We begin with the raw amino-acid sequence, 207 residues long: ATP synthase subunit b 2 (207 aa).

The chain crosses the membrane as a helical span at residues 53–72 (TYASQLLWLVITFGVFYLLM).

Belongs to the ATPase B chain family. As to quaternary structure, F-type ATPases have 2 components, F(1) - the catalytic core - and F(0) - the membrane proton channel. F(1) has five subunits: alpha(3), beta(3), gamma(1), delta(1), epsilon(1). F(0) has three main subunits: a(1), b(2) and c(10-14). The alpha and beta chains form an alternating ring which encloses part of the gamma chain. F(1) is attached to F(0) by a central stalk formed by the gamma and epsilon chains, while a peripheral stalk is formed by the delta and b chains.

The protein resides in the cell inner membrane. F(1)F(0) ATP synthase produces ATP from ADP in the presence of a proton or sodium gradient. F-type ATPases consist of two structural domains, F(1) containing the extramembraneous catalytic core and F(0) containing the membrane proton channel, linked together by a central stalk and a peripheral stalk. During catalysis, ATP synthesis in the catalytic domain of F(1) is coupled via a rotary mechanism of the central stalk subunits to proton translocation. In terms of biological role, component of the F(0) channel, it forms part of the peripheral stalk, linking F(1) to F(0). The b'-subunit is a diverged and duplicated form of b found in plants and photosynthetic bacteria. The polypeptide is ATP synthase subunit b 2 (atpF2) (Rhizobium etli (strain ATCC 51251 / DSM 11541 / JCM 21823 / NBRC 15573 / CFN 42)).